Here is a 156-residue protein sequence, read N- to C-terminus: Small ribosomal subunit protein uS7 (156 aa).

This sequence belongs to the universal ribosomal protein uS7 family. As to quaternary structure, part of the 30S ribosomal subunit. Contacts proteins S9 and S11.

One of the primary rRNA binding proteins, it binds directly to 16S rRNA where it nucleates assembly of the head domain of the 30S subunit. Is located at the subunit interface close to the decoding center, probably blocks exit of the E-site tRNA. The chain is Small ribosomal subunit protein uS7 from Pelotomaculum thermopropionicum (strain DSM 13744 / JCM 10971 / SI).